The following is a 29-amino-acid chain: Trypsin inhibitor 3 (29 aa).

3 disulfides stabilise this stretch: Cys-3–Cys-20, Cys-10–Cys-22, and Cys-16–Cys-28.

This sequence belongs to the protease inhibitor I7 (squash-type serine protease inhibitor) family.

The protein localises to the secreted. In terms of biological role, inhibits trypsin. The protein is Trypsin inhibitor 3 of Luffa aegyptiaca (Sponge gourd).